Here is a 378-residue protein sequence, read N- to C-terminus: Acetylornithine deacetylase (378 aa).

H76 provides a ligand contact to Zn(2+). D78 is an active-site residue. D108 lines the Zn(2+) pocket. E140 is a catalytic residue. E141, E165, and H351 together coordinate Zn(2+).

Belongs to the peptidase M20A family. ArgE subfamily. Homodimer. The cofactor is Zn(2+). Co(2+) is required as a cofactor. Requires glutathione as cofactor.

It localises to the cytoplasm. The enzyme catalyses N(2)-acetyl-L-ornithine + H2O = L-ornithine + acetate. The protein operates within amino-acid biosynthesis; L-arginine biosynthesis; L-ornithine from N(2)-acetyl-L-ornithine (linear): step 1/1. In terms of biological role, catalyzes the hydrolysis of the amide bond of N(2)-acetylated L-amino acids. Cleaves the acetyl group from N-acetyl-L-ornithine to form L-ornithine, an intermediate in L-arginine biosynthesis pathway, and a branchpoint in the synthesis of polyamines. The polypeptide is Acetylornithine deacetylase (Vibrio atlanticus (strain LGP32) (Vibrio splendidus (strain Mel32))).